The chain runs to 232 residues: LexA repressor (232 aa).

The tract at residues 1-25 (MSDDSSDSTDAPGTSRSRDSGLTER) is disordered. Positions 16–25 (RSRDSGLTER) are enriched in basic and acidic residues. The segment at residues 46-66 (IREIGDAVGLTSTSSVAHQLR) is a DNA-binding region (H-T-H motif). Active-site for autocatalytic cleavage activity residues include Ser156 and Lys193.

Belongs to the peptidase S24 family. In terms of assembly, homodimer.

The catalysed reaction is Hydrolysis of Ala-|-Gly bond in repressor LexA.. In terms of biological role, represses a number of genes involved in the response to DNA damage (SOS response), including recA and lexA. In the presence of single-stranded DNA, RecA interacts with LexA causing an autocatalytic cleavage which disrupts the DNA-binding part of LexA, leading to derepression of the SOS regulon and eventually DNA repair. The chain is LexA repressor from Mycolicibacterium gilvum (strain PYR-GCK) (Mycobacterium gilvum (strain PYR-GCK)).